The chain runs to 325 residues: Melanocortin receptor 5 (325 aa).

Residues 1–37 (MNSSFHLHFLDLNLNATEGNLSGPNVKNKSSPCEDMG) lie on the Extracellular side of the membrane. 4 N-linked (GlcNAc...) asparagine glycosylation sites follow: asparagine 2, asparagine 15, asparagine 20, and asparagine 28. Residues 38-61 (IAVEVFLTLGVISLLENILVIGAI) form a helical membrane-spanning segment. At 62-73 (VKNKNLHSPMYF) the chain is on the cytoplasmic side. A helical membrane pass occupies residues 74-97 (FVCSLAVADMLVSMSSAWETITIY). The Extracellular segment spans residues 98–114 (LLNNKHLVIADAFVRHI). The helical transmembrane segment at 115–138 (DNVFDSMICISVVASMCSLLAIAV) threads the bilayer. The Cytoplasmic portion of the chain corresponds to 139–155 (DRYVTIFYALRYHHIMT). Residues 156 to 179 (ARRSGAIIAGIWAFCTGCGIVFIL) form a helical membrane-spanning segment. Over 180 to 186 (YSESTYV) the chain is Extracellular. Residues 187-211 (ILCLISMFFAMLFLLVSLYIHMFLL) form a helical membrane-spanning segment. Residues 212-239 (ARTHVKRIAALPRASSARQRTSMQGAVT) lie on the Cytoplasmic side of the membrane. Residues 240–265 (VTMLLGVFTVCWAPFFLHLTLMLSCP) traverse the membrane as a helical segment. Residues 266–273 (QNLYCSCF) are Extracellular-facing. The chain crosses the membrane as a helical span at residues 274-297 (MSHFNMYLILIMCNSVMDPLIYAF). The Cytoplasmic segment spans residues 298 to 325 (RSQEMRKTFKEIICCRGFRIACSFPRRD). Residues cysteine 311 and cysteine 312 are each lipidated (S-palmitoyl cysteine).

It belongs to the G-protein coupled receptor 1 family.

Its subcellular location is the cell membrane. Receptor for MSH (alpha, beta and gamma) and ACTH. The activity of this receptor is mediated by G proteins which activate adenylate cyclase. This receptor is a possible mediator of the immunomodulation properties of melanocortins. The chain is Melanocortin receptor 5 (MC5R) from Pan troglodytes (Chimpanzee).